We begin with the raw amino-acid sequence, 156 residues long: Cyanate hydratase (156 aa).

Residues Arg-96, Glu-99, and Ser-122 contribute to the active site.

Belongs to the cyanase family.

The catalysed reaction is cyanate + hydrogencarbonate + 3 H(+) = NH4(+) + 2 CO2. Its function is as follows. Catalyzes the reaction of cyanate with bicarbonate to produce ammonia and carbon dioxide. This Pseudomonas paraeruginosa (strain DSM 24068 / PA7) (Pseudomonas aeruginosa (strain PA7)) protein is Cyanate hydratase.